The primary structure comprises 227 residues: Heptaprenylglyceryl phosphate synthase (227 aa).

Lys-13 contacts sn-glycerol 1-phosphate. Mg(2+)-binding residues include Asp-15 and Thr-41. Residues 159–164, Gly-189, and 209–210 contribute to the sn-glycerol 1-phosphate site; these read YLEYSG and GN.

Belongs to the GGGP/HepGP synthase family. Group I subfamily. As to quaternary structure, homodimer. It depends on Mg(2+) as a cofactor.

The enzyme catalyses sn-glycerol 1-phosphate + all-trans-heptaprenyl diphosphate = 3-heptaprenyl-sn-glycero-1-phosphate + diphosphate. It functions in the pathway membrane lipid metabolism; glycerophospholipid metabolism. Prenyltransferase that catalyzes in vivo the transfer of the heptaprenyl moiety of heptaprenyl pyrophosphate (HepPP; 35 carbon atoms) to the C3 hydroxyl of sn-glycerol-1-phosphate (G1P), producing heptaprenylglyceryl phosphate (HepGP). This reaction is an ether-bond-formation step in the biosynthesis of archaea-type G1P-based membrane lipids found in Bacillales. The polypeptide is Heptaprenylglyceryl phosphate synthase (Exiguobacterium sibiricum (strain DSM 17290 / CCUG 55495 / CIP 109462 / JCM 13490 / 255-15)).